Reading from the N-terminus, the 322-residue chain is F-actin-capping protein subunit beta (322 aa).

Belongs to the F-actin-capping protein beta subunit family. In terms of assembly, component of the F-actin capping complex, composed of a heterodimer of an alpha and a beta subunit.

It is found in the cytoplasm. The protein localises to the cytoskeleton. It localises to the actin patch. In terms of biological role, F-actin-capping proteins bind in a Ca(2+)-independent manner to the fast growing ends of actin filaments (barbed end) thereby blocking the exchange of subunits at these ends. Unlike other capping proteins (such as gelsolin and severin), these proteins do not sever actin filaments. This chain is F-actin-capping protein subunit beta (cap2), found in Aspergillus fumigatus (strain ATCC MYA-4609 / CBS 101355 / FGSC A1100 / Af293) (Neosartorya fumigata).